The primary structure comprises 514 residues: Na(+)/H(+) antiporter NhaB (514 aa).

Transmembrane regions (helical) follow at residues L23–A43, P63–A83, L97–F117, L120–F140, F144–I164, L202–P222, F238–M258, A303–I323, L357–I377, L391–I411, A447–I467, and V475–F495.

The protein belongs to the NhaB Na(+)/H(+) (TC 2.A.34) antiporter family.

It localises to the cell inner membrane. The enzyme catalyses 2 Na(+)(in) + 3 H(+)(out) = 2 Na(+)(out) + 3 H(+)(in). Na(+)/H(+) antiporter that extrudes sodium in exchange for external protons. The protein is Na(+)/H(+) antiporter NhaB of Salmonella heidelberg (strain SL476).